Reading from the N-terminus, the 470-residue chain is MTVRTRFAPSPTGFLHVGGVRTALFSWLYAKHHNGQFILRIEDTDRERSTQESVQAILDGMAWLGLNFDEGPYYQTERYARYQQVAQQLLKEGKAYRCQCSKERLEALREAQLAAKEKPRYDGHCRNQILPDSGVPYVIRFRNPDAGIVSFHDEVYGDIHVDNSELDDLILVRSDGHPTYNFAVVIDDWDMKITHVIRGDDHINNTPRQINLFKALDAPVPVFAHLPMILGEDGKRLSKRHGAVSVLQFKELGVLPHALLNYLVRLGWSHGDQEIFSVQEMINSFDLKNVSRGVSSFNYDKLYWLNQHYQKSDSQESVANALQWHFEQAGIDLNQGPDLKDLVAVQAERCKSLAEMCQISQYFYTDTIEYNEDAVKKHLRPVVLEPLMVLHERLKALDEWKNDKIQECINDVSLQFDLNLGKIAQPLRVAVTGSGTSPSIDMTLALLGKNKSIKRLEDALEKIRARASAV.

Residues 9–19 carry the 'HIGH' region motif; it reads PSPTGFLHVGG. The short motif at 236-240 is the 'KMSKS' region element; that stretch reads RLSKR. Position 239 (K239) interacts with ATP.

This sequence belongs to the class-I aminoacyl-tRNA synthetase family. Glutamate--tRNA ligase type 1 subfamily. Monomer.

It localises to the cytoplasm. The enzyme catalyses tRNA(Glu) + L-glutamate + ATP = L-glutamyl-tRNA(Glu) + AMP + diphosphate. In terms of biological role, catalyzes the attachment of glutamate to tRNA(Glu) in a two-step reaction: glutamate is first activated by ATP to form Glu-AMP and then transferred to the acceptor end of tRNA(Glu). This Legionella pneumophila (strain Paris) protein is Glutamate--tRNA ligase.